The sequence spans 401 residues: Nicotinamide/nicotinic acid mononucleotide adenylyltransferase 1 (401 aa).

2 disordered regions span residues 1–30 and 48–123; these read MDPT…KIPK and APFN…RGVQ. Over residues 52–69 the composition is skewed to basic residues; sequence IKRKKKHPKHHHHHHHSR. Ser-91, Ser-95, Ser-96, and Ser-111 each carry phosphoserine. Residues Ser-173 and Phe-174 each contribute to the NAD(+) site. His-181 is a binding site for ATP. 6 residues coordinate NAD(+): Thr-253, Gly-288, Asp-290, Trp-301, Arg-320, and Asn-351. 356–359 lines the ATP pocket; that stretch reads TKVR.

Belongs to the eukaryotic NMN adenylyltransferase family. Homotetramer. Ni(2+) serves as cofactor.

It is found in the cytoplasm. The protein resides in the nucleus. It catalyses the reaction beta-nicotinamide D-ribonucleotide + ATP + H(+) = diphosphate + NAD(+). The catalysed reaction is nicotinate beta-D-ribonucleotide + ATP + H(+) = deamido-NAD(+) + diphosphate. It participates in cofactor biosynthesis; NAD(+) biosynthesis; deamido-NAD(+) from nicotinate D-ribonucleotide: step 1/1. It functions in the pathway cofactor biosynthesis; NAD(+) biosynthesis; NAD(+) from nicotinamide D-ribonucleotide: step 1/1. In terms of biological role, catalyzes the formation of NAD(+) from nicotinamide mononucleotide (NMN) and ATP. Can also use the deamidated form; nicotinic acid mononucleotide (NaMN) as substrate to form deamido-NAD(+) (NaAD). Key enzyme in both de novo and salvage pathways for NAD(+) biosynthesis. Predominantly acts in the salvage pathways via NMN. The polypeptide is Nicotinamide/nicotinic acid mononucleotide adenylyltransferase 1 (Saccharomyces cerevisiae (strain ATCC 204508 / S288c) (Baker's yeast)).